The primary structure comprises 274 residues: Thiamine kinase (274 aa).

The protein belongs to the thiamine kinase family.

It carries out the reaction thiamine + ATP = thiamine phosphate + ADP + H(+). It participates in cofactor biosynthesis; thiamine diphosphate biosynthesis; thiamine phosphate from thiamine: step 1/1. Its function is as follows. Catalyzes the ATP-dependent phosphorylation of thiamine to thiamine phosphate. Is involved in thiamine salvage. The protein is Thiamine kinase of Escherichia coli O9:H4 (strain HS).